The chain runs to 314 residues: Secreted frizzled-related protein 5 (314 aa).

An N-terminal signal peptide occupies residues 1–21 (MWVAWSARTAALALLLGALHG). Residues 45–162 (SKPPQCLDIP…PLDNDLCIAV (118 aa)) enclose the FZ domain. 8 cysteine pairs are disulfide-bonded: Cys-50–Cys-113, Cys-60–Cys-106, Cys-97–Cys-132, Cys-121–Cys-159, Cys-125–Cys-149, Cys-178–Cys-250, Cys-181–Cys-252, and Cys-195–Cys-300. One can recognise an NTR domain in the interval 178–300 (CAQCEMEHSA…AVKFMFSYPC (123 aa)).

This sequence belongs to the secreted frizzled-related protein (sFRP) family.

It localises to the secreted. Its function is as follows. Soluble frizzled-related proteins (sFRPS) function as modulators of Wnt signaling through direct interaction with Wnts. They have a role in regulating cell growth and differentiation in specific cell types. SFRP5 may be involved in determining the polarity of photoreceptor, and perhaps, other cells in the retina. This Mus musculus (Mouse) protein is Secreted frizzled-related protein 5 (Sfrp5).